A 203-amino-acid polypeptide reads, in one-letter code: Proteasome subunit beta 2 (203 aa).

Residues 1–9 (MGEEFQVGA) constitute a propeptide, removed in mature form; by autocatalysis. T10 acts as the Nucleophile in catalysis.

This sequence belongs to the peptidase T1B family. In terms of assembly, the 20S proteasome core is composed of 14 alpha and 14 beta subunits that assemble into four stacked heptameric rings, resulting in a barrel-shaped structure. The two inner rings, each composed of seven catalytic beta subunits, are sandwiched by two outer rings, each composed of seven alpha subunits. The catalytic chamber with the active sites is on the inside of the barrel. Has a gated structure, the ends of the cylinder being occluded by the N-termini of the alpha-subunits. Is capped at one or both ends by the proteasome regulatory ATPase, PAN.

It is found in the cytoplasm. It carries out the reaction Cleavage of peptide bonds with very broad specificity.. With respect to regulation, the formation of the proteasomal ATPase PAN-20S proteasome complex, via the docking of the C-termini of PAN into the intersubunit pockets in the alpha-rings, triggers opening of the gate for substrate entry. Interconversion between the open-gate and close-gate conformations leads to a dynamic regulation of the 20S proteasome proteolysis activity. Component of the proteasome core, a large protease complex with broad specificity involved in protein degradation. The chain is Proteasome subunit beta 2 from Pyrobaculum neutrophilum (strain DSM 2338 / JCM 9278 / NBRC 100436 / V24Sta) (Thermoproteus neutrophilus).